Consider the following 141-residue polypeptide: MLTADDKKLIQTTWDKVQGHQEDFGAEALQRMFITYPQTKTYFPHFDLSPGSDQVRGHGKKVVNALGNAVKSMDNLSQALSELSNLHAYNLRVDPVNFKLLSQCFQVVLAVHLGKEYTPEVHSAFDKFLSAVAAVLAEKYR.

Positions Met-1–Arg-141 constitute a Globin domain. Heme b contacts are provided by His-58 and His-87.

This sequence belongs to the globin family. As to quaternary structure, heterotetramer of two alpha-D chains and two beta chains. Red blood cells.

Its function is as follows. Involved in oxygen transport from the lung to the various peripheral tissues. The sequence is that of Hemoglobin subunit alpha-D/D' (HBAD) from Gyps rueppelli (Rueppell's griffon).